The sequence spans 356 residues: 7,8-didemethyl-8-hydroxy-5-deazariboflavin synthase (356 aa).

One can recognise a Radical SAM core domain in the interval 40-280; the sequence is ITYSKNVFIP…KDISIQVPPN (241 aa). Residues C54, C58, and C61 each coordinate [4Fe-4S] cluster.

It belongs to the radical SAM superfamily. CofG family. As to quaternary structure, consists of two subunits, CofG and CofH. It depends on [4Fe-4S] cluster as a cofactor.

It carries out the reaction 5-amino-5-(4-hydroxybenzyl)-6-(D-ribitylimino)-5,6-dihydrouracil + S-adenosyl-L-methionine = 7,8-didemethyl-8-hydroxy-5-deazariboflavin + 5'-deoxyadenosine + L-methionine + NH4(+) + H(+). Its pathway is cofactor biosynthesis; coenzyme F0 biosynthesis. Its function is as follows. Catalyzes the radical-mediated synthesis of 7,8-didemethyl-8-hydroxy-5-deazariboflavin from 5-amino-5-(4-hydroxybenzyl)-6-(D-ribitylimino)-5,6-dihydrouracil. The protein is 7,8-didemethyl-8-hydroxy-5-deazariboflavin synthase of Methanococcus aeolicus (strain ATCC BAA-1280 / DSM 17508 / OCM 812 / Nankai-3).